Reading from the N-terminus, the 30-residue chain is Cytochrome c3, 50 kDa (30 aa).

In terms of assembly, monomer. Post-translationally, binds 4 heme groups per subunit.

Its subcellular location is the periplasm. Functionally, participates in sulfate respiration coupled with phosphorylation by transferring electrons from the enzyme dehydrogenase to ferredoxin. The protein is Cytochrome c3, 50 kDa of Desulfuromonas acetoxidans (Chloropseudomonas ethylica).